A 99-amino-acid chain; its full sequence is MREISQKDLNLAFGAGETDPNTQLLNDLGNNMAWGAALGAPGGLGSAALGAAGGALQTVGQGLIDHGPVNVPIPVLIGPSWNGSGSGYNSATSSSGSGS.

Residues 1 to 15 (MREISQKDLNLAFGA) form the signal peptide. Residues 80-99 (SWNGSGSGYNSATSSSGSGS) are disordered. Over residues 87–99 (GYNSATSSSGSGS) the composition is skewed to low complexity. Serine 99 carries the serine microcin E492 siderophore ester modification.

The protein belongs to the class IIa microcin family. Multimer. Possibly forms a homodimer or a homotrimer. In terms of processing, the C-terminal Ser is modified by attachment to a siderophore similar to enterobactin, which can bind one atom of iron. The modification consists of an ester linkage of the serine carboxyl to O6 of a glucose which is linked by a C-glycosidic bond to the 5'-benzoyl of a linear triester of N-(2,3-dihydroxybenzoyl)serine. Presence of the siderophore ester increases the antibacterial activity of the protein.

Channel-forming bacteriocin. Forms cation-selective channels. Active on enterobacteria, with highest activity against E.coli. Not active on other Gram-negative bacteria, Gram-positive bacteria or fungi. The unmodified protein is active against E.coli and S.enteritidis. When the siderophore ester is present at Ser-99, antibacterial activity against these species is increased and activity is also detected against E.cloacae and K.pneumoniae. Neutralized by its immunity protein MceB. In Klebsiella pneumoniae, this protein is Microcin E492.